The primary structure comprises 339 residues: Phenylalanine--tRNA ligase alpha subunit (339 aa).

Glu254 provides a ligand contact to Mg(2+).

This sequence belongs to the class-II aminoacyl-tRNA synthetase family. Phe-tRNA synthetase alpha subunit type 1 subfamily. As to quaternary structure, tetramer of two alpha and two beta subunits. Mg(2+) serves as cofactor.

It localises to the cytoplasm. The catalysed reaction is tRNA(Phe) + L-phenylalanine + ATP = L-phenylalanyl-tRNA(Phe) + AMP + diphosphate + H(+). In Clostridium acetobutylicum (strain ATCC 824 / DSM 792 / JCM 1419 / IAM 19013 / LMG 5710 / NBRC 13948 / NRRL B-527 / VKM B-1787 / 2291 / W), this protein is Phenylalanine--tRNA ligase alpha subunit.